We begin with the raw amino-acid sequence, 552 residues long: MMVEDLVYRYALMNAVKHKGKANPGAVMGAVMSNEPELRKRAPEVKEAVQAAVEKVNSLKPEEQQSEMERLGLEIRERKQKKRQGLRNLPDVKGEVVLRFAPNPSGPLHIGHARAAILNHEYARRYDGKLILRIEDTDPRRVDPEAYDMIPSDLEWLGVEWDETIIQSDRMEIYYEYTERLIERGGAYVCTCTPEAFREFKNEGKACHCRDLGVRENLQRWREMFEMPEGSAVVRVKTDLQHPNPAIRDWVSMRIVEAEHPRTGTRYRVYPMMNFSVAVDDHLLGVTHVLRGKDHLANSEKQEYLYRHLGWEPPVFIHYGRLKMDDIALSTSGAREGIVEGKYSGWDDPRLGTIRAIARRGIRSDAIRKLMVEIGVKIADSTMSWKKIYGLNRNILEEEARRYFFAADPVRFEIEGLPGPIRVERSLHPDKPELGNRILELNGDVYLPRGDLREGPLRLIDAVNVIYSDGELRYHSEGIEEARELQAAMIHWVPAESALKAVVVMPDASEIEGVIEGDASELEVDDVVQLERFGFARVDSSGERLVFYYAHK.

Residues 102 to 112 (PNPSGPLHIGH) carry the 'HIGH' region motif.

This sequence belongs to the class-I aminoacyl-tRNA synthetase family. Glutamate--tRNA ligase type 2 subfamily.

It localises to the cytoplasm. The catalysed reaction is tRNA(Glu) + L-glutamate + ATP = L-glutamyl-tRNA(Glu) + AMP + diphosphate. Its function is as follows. Catalyzes the attachment of glutamate to tRNA(Glu) in a two-step reaction: glutamate is first activated by ATP to form Glu-AMP and then transferred to the acceptor end of tRNA(Glu). The chain is Glutamate--tRNA ligase from Methanothermobacter marburgensis (strain ATCC BAA-927 / DSM 2133 / JCM 14651 / NBRC 100331 / OCM 82 / Marburg) (Methanobacterium thermoautotrophicum).